Here is a 154-residue protein sequence, read N- to C-terminus: Superoxide dismutase [Cu-Zn] (154 aa).

Cu cation contacts are provided by H47, H49, and H64. A disulfide bond links C58 and C147. 4 residues coordinate Zn(2+): H64, H72, H81, and D84. H121 is a binding site for Cu cation. Residues 125–137 (DDLGRGGNEESKK) are compositionally biased toward basic and acidic residues. The disordered stretch occupies residues 125–147 (DDLGRGGNEESKKTGNAGPRPAC). Residue R144 participates in substrate binding.

As to quaternary structure, homodimer. Cu cation serves as cofactor. The cofactor is Zn(2+).

The protein localises to the cytoplasm. The catalysed reaction is 2 superoxide + 2 H(+) = H2O2 + O2. Functionally, destroys radicals which are normally produced within the cells and which are toxic to biological systems. The chain is Superoxide dismutase [Cu-Zn] from Aspergillus niger.